A 447-amino-acid chain; its full sequence is DNA primase DnaG (447 aa).

The Toprim domain occupies 200-274 (DSIIVVEGRA…DIDYVARAPE (75 aa)). 3 residues coordinate Mg(2+): E206, D248, and D250. The disordered stretch occupies residues 316-339 (ERRRGGARKQEYTKKGSLNPQPQV).

This sequence belongs to the archaeal DnaG primase family. Forms a ternary complex with MCM helicase and DNA. Component of the archaeal exosome complex. It depends on Mg(2+) as a cofactor.

It catalyses the reaction ssDNA + n NTP = ssDNA/pppN(pN)n-1 hybrid + (n-1) diphosphate.. Functionally, RNA polymerase that catalyzes the synthesis of short RNA molecules used as primers for DNA polymerase during DNA replication. Also part of the exosome, which is a complex involved in RNA degradation. Acts as a poly(A)-binding protein that enhances the interaction between heteromeric, adenine-rich transcripts and the exosome. This is DNA primase DnaG from Pyrococcus furiosus (strain ATCC 43587 / DSM 3638 / JCM 8422 / Vc1).